The primary structure comprises 227 residues: Aspartyl protease inhibitor (227 aa).

The first 15 residues, 1 to 15, serve as a signal peptide directing secretion; that stretch reads MKLVVLCVLCGIALA. Residues 88–109 show a composition bias toward basic and acidic residues; the sequence is SLKSRMAGKKEKAVTPKEEDLP. The disordered stretch occupies residues 88–116; sequence SLKSRMAGKKEKAVTPKEEDLPKAPQKPS. Cys131 and Cys223 are oxidised to a cystine.

The protein belongs to the protease inhibitor I33 family.

Its subcellular location is the secreted. Aspartyl protease inhibitor. This is Aspartyl protease inhibitor (API) from Ostertagia ostertagi (Brown stomach worm).